A 331-amino-acid polypeptide reads, in one-letter code: Bifunctional nuclease 1 (331 aa).

Residues 126 to 261 form the BFN domain; that stretch reads CVQNNPRVLR…RIAYNNGLKV (136 aa). Positions 291–326 constitute a UVR domain; the sequence is EAQEFDLVRNMLVAAVEERYKDAAQYRDQLFMFRAK.

It belongs to the bifunctional nuclease family.

It is found in the nucleus. Functionally, bifunctional nuclease with both RNase and DNase activities. Involved in basal defense response. Participates in abscisic acid-derived callose deposition following infection by a necrotrophic pathogen. In Oryza sativa subsp. japonica (Rice), this protein is Bifunctional nuclease 1 (BBD1).